Reading from the N-terminus, the 666-residue chain is Probable potassium transport system protein Kup (666 aa).

Helical transmembrane passes span 16 to 36 (GFII…LYTM), 58 to 78 (ISLI…LVAL), 99 to 119 (TPWL…DGAL), 141 to 161 (IFQN…LLFA), 167 to 187 (TGVI…FLGI), 221 to 241 (IFIL…YSDL), 253 to 273 (WPFV…WILA), 292 to 312 (FTMH…QALI), 343 to 363 (TYIP…VLLF), 373 to 393 (YGLA…FFLI), 402 to 422 (VLLM…ASAV), and 424 to 444 (FMHG…IMTI).

This sequence belongs to the HAK/KUP transporter (TC 2.A.72) family.

It localises to the cell membrane. It catalyses the reaction K(+)(in) + H(+)(in) = K(+)(out) + H(+)(out). Functionally, transport of potassium into the cell. Likely operates as a K(+):H(+) symporter. This is Probable potassium transport system protein Kup from Streptococcus agalactiae serotype V (strain ATCC BAA-611 / 2603 V/R).